The following is a 47-amino-acid chain: uncharacterized protein (47 aa).

This is an uncharacterized protein from Escherichia coli.